We begin with the raw amino-acid sequence, 395 residues long: HORMA domain-containing protein 1 (395 aa).

Residues 24-226 (QQSLVLVKRL…TPFHTFKVKV (203 aa)) form the HORMA domain. Residues 329–395 (DVSESKTRSG…RKFSEPKEYV (67 aa)) form a disordered region. Polar residues predominate over residues 344 to 353 (KMANGNQPVK). The span at 354-363 (SSKENRKRNQ) shows a compositional bias: basic and acidic residues. Ser-377 is modified (phosphoserine). Residues 384–387 (KRRK) carry the Nuclear localization signal motif.

As to quaternary structure, interacts with HORMAD2. Interacts with IHO1. Post-translationally, phosphorylated at Ser-378 in a SPO11-dependent manner.

The protein resides in the nucleus. It localises to the chromosome. In terms of biological role, plays a key role in meiotic progression. Regulates 3 different functions during meiosis: ensures that sufficient numbers of processed DNA double-strand breaks (DSBs) are available for successful homology search by increasing the steady-state numbers of single-stranded DSB ends. Promotes synaptonemal-complex formation independently of its role in homology search. Plays a key role in the male mid-pachytene checkpoint and the female meiotic prophase checkpoint: required for efficient build-up of ATR activity on unsynapsed chromosome regions, a process believed to form the basis of meiotic silencing of unsynapsed chromatin (MSUC) and meiotic prophase quality control in both sexes. The sequence is that of HORMA domain-containing protein 1 (HORMAD1) from Canis lupus familiaris (Dog).